The chain runs to 2282 residues: MVIRGVCDSISRDIASSAVTGKRHTTQMSIFKTIARGHGRFKARSSRQFIVSTVCELLLARHKDRGSQLIVASNLRLVLSHKPHLEHLLWDHYRRSVACLCRELSALCVNSMEESGLEMLIQELLLCLDLLTKPKYVGMAELKHDLWNCIDSMLYKYKEVSEMHVLILSISVSLFQVVFGSDYEICHEMVPSIFAIGTKLFTSKSKAVREISLRFLLKMEIYLASIFGKTCPVPLDQDRLNQIEDHMVELLQVLKNEYNSSSLQDNDVVFEDEIVLVNSKKTMQFLICKLIAMLEYVLSYTLTDGNVKQEEDLHGPRKKPRVSISPETPTLNAISAQIQAFQASKPISEVDKPLASLLSSISGSLDKTTRWKFFSAAKLLAQSPPLSPKNAHDVVFLTKWWTEGVAKLRTRSEDSACVLLTTILRQHSSALDPKLVVSLASNAESKGPLKYSNVSLEFVTCASQFLISHKACSQSQWSDWLFVVLASEQIGATSSKMMLDTAGLLLASVGCLIRMIETPQNTLETTTSSIMWKTDFKTTSSTSGDIELTECMPSITIRDLKSGFQNYLNELGDWCESASIDVNVVLPSTVFALVVCAVLDRQGTPVGLNSRISDFLAVVTKRVEGGSCDSHVFFEAITLINRLRHYNLLGDSLCILWDSFINGIEKLLNVSQVTENEFDPDSPSGKNIMPDLRLSLLLRGPLKSEPFLLAIFPSDIKQYASCDPGKRLPELFRYVGQTLLSSYLWDCSPLAKQLVVDLLDVYFKSGMTESSDADDLQRWVSRDKFLVGPQLLYGLMQVSTPSEYLNLYSSVAICAAERVSSQDSYHCMDATLTRMSSAKSKSRLVVEEMIVALLSVHRECLSLLPVVIERVKTDMLRQKLDTDSESLVRFCKQTGTDSILDKILSVKVGSCVFEEEGHFSTQQLLCSEDSLQWNTQGPPLDILSRTWPDYSPCTLLMLVRGLLNLMLKPRVSFEVPLRLVQLKYVLCLFPKRDLCSPDNYVLQQMVSCLISFLSHSTVGASVRHLLSELFEVIKLPHLEGYIADLGEQSFFGADVSQLLYLLHPSEPHLCKYIEWVNSGFSDPEAFLSVFLHTEISDKLKATLLKSLDFGVTNMTLLGLMDIVCTKETVSFIKRASKLYSFDWEESRVLSLLLGRGYLLFGESSNSAPKTNTETSFWNALTSEFLTLLRGSDFTAKFAVEVCLSKIVTKVQVQVPAELQHVFDSGVLEYTHTDEPTTGWVQKTTLELLGLLGGDFELLIPLVRTLSSTSPLLPFIFKWTCLEYCRQGEPSYLSQILSQNSSLVVIETFFFVNSFTAHRTLNWQPEIVNSALTLHLYTEALYFLEADKACWASQEIQPSYYDIYQNIDDPDLFYGLKFTPCLESALKQLNHENQNLTCFEYESGLFDWSVETGGGESKTDILSHLSTSGMNGLAYTINSDDVYRWKLGLLEDPILETGTDDQTVLSQLRSIVVDEKPVLKSTLSDKYLGMQYLLYQMQLDANSDYLDRIQPPDGVLDILQFCASAWRTIKTETASYNGILTLSKLGAVSRELNNAQISKNCAVSLQELSRTASHISGNVCAISIASCLWSEAAVSRTTPVEMLKRMLGSINPGQSPVLASQFCQATVLLTDWSSQARMMSPEKIHRLYIAGASEYMALIPAGNPKTRMFHVFAKFCETQLHSQNYDEQIHNAVMDIERLEGELANLSRISMTREIKHAQRISRKSLDRAKESKLNYERLKAMFLDSAVQFYLLSCAVRDSEYHEDVTRLISLWFGNSHVNFVNERMQDYALIPSFKLAPLINQLSSKLSYEPNNYFQTLLLDLVSATCKAHPFHCLYQISSLMRTDASPQTERRIQAAVKVWNTVKTQEKTICRAMEIFTDKCVELANAEWPGKGQKASINQFPNGSWWQNGLRKLNIPPPTAQIPLSLDYTDIPSMNKVLAQVIKAGGISHPKIMDFQLSDGSVSKALLKGGKDDMRQDAIMEQVFCRVNQYFLGDPETRKRGLSIRTYNVVPMGPRAGMIEFVANTESLQAALVPLHEKDDWDYLTGRTKMSAVAKESNSRRVEVLEEIYTHVTPVMSQYFFQNFRSSAQAWFKARTNYVRSAAASSMLGYILGIGDRHCNNIMIDYKTGQLVHIDLGISFDQGKNLTVPEKVPFRLTRDMVDAMGSVGVDGPFRRCCELSLGLFREQQDNILSILNVLRYDPLYSWTMSPKKKQTRSSSGSDLSDIKLEESNVTADMCLSGVKGKLAVRLSTEAVVRELIGEAVSVENLAVIFHGWTPFY.

Residues 1325 to 1844 (EIVNSALTLH…LYQISSLMRT (520 aa)) form the FAT domain. Positions 1939–2250 (VLAQVIKAGG…LSGVKGKLAV (312 aa)) constitute a PI3K/PI4K catalytic domain. The segment at 1945-1951 (KAGGISH) is G-loop. The catalytic loop stretch occupies residues 2115–2123 (GIGDRHCNN). Residues 2135–2159 (HIDLGISFDQGKNLTVPEKVPFRLT) form an activation loop region. The FATC domain maps to 2250–2282 (VRLSTEAVVRELIGEAVSVENLAVIFHGWTPFY).

The protein belongs to the PI3/PI4-kinase family. ATM subfamily. As to quaternary structure, associates with DNA double-strand breaks.

Its subcellular location is the nucleus. It localises to the chromosome. The protein localises to the telomere. It carries out the reaction L-seryl-[protein] + ATP = O-phospho-L-seryl-[protein] + ADP + H(+). The catalysed reaction is L-threonyl-[protein] + ATP = O-phospho-L-threonyl-[protein] + ADP + H(+). Its function is as follows. Serine/threonine protein kinase which activates checkpoint signaling upon genotoxic stresses such as ionizing radiation (IR), ultraviolet light (UV), or DNA replication stalling, thereby acting as a DNA damage sensor. Recognizes the substrate consensus sequence [ST]-Q. Phosphorylates histone H2A to form H2AS128ph (gamma-H2A) at sites of DNA damage, involved in the regulation of DNA damage response mechanism. Required for the control of telomere length and genome stability. The protein is Serine/threonine-protein kinase TEL1 (TEL1) of Yarrowia lipolytica (strain CLIB 122 / E 150) (Yeast).